We begin with the raw amino-acid sequence, 479 residues long: Transcript termination protein A18 (479 aa).

Positions 99–255 (KNKHKRPTYI…NDIINVSNSL (157 aa)) constitute a Helicase ATP-binding domain. 112–119 (LACGFGKT) is an ATP binding site. A DESH box motif is present at residues 205-208 (DESH). Residues 308-469 (ILDTIIYDFN…EKKGKKKELA (162 aa)) enclose the Helicase C-terminal domain.

Belongs to the helicase family. Poxviruses subfamily. As to quaternary structure, interacts with G2. Might be part of a transcription complex composed at least of G2, A18, and H5.

Its subcellular location is the virion. In terms of biological role, DNA helicase which seems to act as a postreplicative transcription termination factor. Involved in ATP-dependent release of nascent RNA. Forms a stable complex with single-stranded DNA, and to a lesser extent RNA. The sequence is that of Transcript termination protein A18 from Homo sapiens (Human).